The primary structure comprises 103 residues: Large ribosomal subunit protein eL30 (103 aa).

This sequence belongs to the eukaryotic ribosomal protein eL30 family.

The chain is Large ribosomal subunit protein eL30 from Methanothrix thermoacetophila (strain DSM 6194 / JCM 14653 / NBRC 101360 / PT) (Methanosaeta thermophila).